We begin with the raw amino-acid sequence, 326 residues long: Vacuolar protein sorting-associated protein 26A (326 aa).

It belongs to the VPS26 family. In terms of assembly, component of the heterotrimeric retromer cargo-selective complex (CSC) which is believed to associate with variable sorting nexins to form functionally distinct retromer complex variants.

Its subcellular location is the cytoplasm. It localises to the endosome membrane. The protein localises to the early endosome. Functionally, acts as a component of the retromer cargo-selective complex (CSC). The CSC is believed to be the core functional component of retromer or respective retromer complex variants acting to prevent missorting of selected transmembrane cargo proteins into the lysosomal degradation pathway. Retromer mediates retrograde transport of cargo proteins from endosomes to the trans-Golgi network (TGN). This chain is Vacuolar protein sorting-associated protein 26A (vps26a), found in Xenopus tropicalis (Western clawed frog).